Consider the following 302-residue polypeptide: Probable alpha-L-glutamate ligase (302 aa).

The region spanning 112–294 (LQLLLKAGIP…IAAEIIDYIE (183 aa)) is the ATP-grasp domain. ATP-binding positions include Lys148, 185-186 (DF), Asp194, and 218-220 (RAN). Mg(2+)-binding residues include Asp255, Glu267, and Asn269. Residues Asp255, Glu267, and Asn269 each coordinate Mn(2+).

The protein belongs to the RimK family. Mg(2+) serves as cofactor. Mn(2+) is required as a cofactor.

The protein is Probable alpha-L-glutamate ligase of Haemophilus influenzae (strain ATCC 51907 / DSM 11121 / KW20 / Rd).